We begin with the raw amino-acid sequence, 110 residues long: Large ribosomal subunit protein uL22 (110 aa).

It belongs to the universal ribosomal protein uL22 family. As to quaternary structure, part of the 50S ribosomal subunit.

This protein binds specifically to 23S rRNA; its binding is stimulated by other ribosomal proteins, e.g. L4, L17, and L20. It is important during the early stages of 50S assembly. It makes multiple contacts with different domains of the 23S rRNA in the assembled 50S subunit and ribosome. In terms of biological role, the globular domain of the protein is located near the polypeptide exit tunnel on the outside of the subunit, while an extended beta-hairpin is found that lines the wall of the exit tunnel in the center of the 70S ribosome. This Nitrosomonas eutropha (strain DSM 101675 / C91 / Nm57) protein is Large ribosomal subunit protein uL22.